A 209-amino-acid polypeptide reads, in one-letter code: Large ribosomal subunit protein uL3 (209 aa).

This sequence belongs to the universal ribosomal protein uL3 family. In terms of assembly, part of the 50S ribosomal subunit. Forms a cluster with proteins L14 and L19.

In terms of biological role, one of the primary rRNA binding proteins, it binds directly near the 3'-end of the 23S rRNA, where it nucleates assembly of the 50S subunit. This chain is Large ribosomal subunit protein uL3, found in Brevibacillus brevis (strain 47 / JCM 6285 / NBRC 100599).